We begin with the raw amino-acid sequence, 108 residues long: Small ribosomal subunit protein bS6 (108 aa).

It belongs to the bacterial ribosomal protein bS6 family.

In terms of biological role, binds together with bS18 to 16S ribosomal RNA. The polypeptide is Small ribosomal subunit protein bS6 (Dichelobacter nodosus (strain VCS1703A)).